We begin with the raw amino-acid sequence, 480 residues long: Ribosomal protein uS12 methylthiotransferase RimO (480 aa).

The MTTase N-terminal domain occupies Leu14–Ala135. Positions 23, 59, 98, 193, 197, and 200 each coordinate [4Fe-4S] cluster. The 232-residue stretch at Leu179 to Arg410 folds into the Radical SAM core domain. Residues Ala412–Leu480 form the TRAM domain.

The protein belongs to the methylthiotransferase family. RimO subfamily. It depends on [4Fe-4S] cluster as a cofactor.

Its subcellular location is the cytoplasm. It catalyses the reaction L-aspartate(89)-[ribosomal protein uS12]-hydrogen + (sulfur carrier)-SH + AH2 + 2 S-adenosyl-L-methionine = 3-methylsulfanyl-L-aspartate(89)-[ribosomal protein uS12]-hydrogen + (sulfur carrier)-H + 5'-deoxyadenosine + L-methionine + A + S-adenosyl-L-homocysteine + 2 H(+). Its function is as follows. Catalyzes the methylthiolation of an aspartic acid residue of ribosomal protein uS12. The protein is Ribosomal protein uS12 methylthiotransferase RimO of Nocardioides sp. (strain ATCC BAA-499 / JS614).